We begin with the raw amino-acid sequence, 298 residues long: Acetyl-coenzyme A carboxylase carboxyl transferase subunit beta (298 aa).

In terms of domain architecture, CoA carboxyltransferase N-terminal spans Pro-41–Pro-298. The Zn(2+) site is built by Cys-45, Cys-48, Cys-64, and Cys-67. The segment at Cys-45 to Cys-67 adopts a C4-type zinc-finger fold.

Belongs to the AccD/PCCB family. Acetyl-CoA carboxylase is a heterohexamer composed of biotin carboxyl carrier protein (AccB), biotin carboxylase (AccC) and two subunits each of ACCase subunit alpha (AccA) and ACCase subunit beta (AccD). It depends on Zn(2+) as a cofactor.

Its subcellular location is the cytoplasm. The enzyme catalyses N(6)-carboxybiotinyl-L-lysyl-[protein] + acetyl-CoA = N(6)-biotinyl-L-lysyl-[protein] + malonyl-CoA. Its pathway is lipid metabolism; malonyl-CoA biosynthesis; malonyl-CoA from acetyl-CoA: step 1/1. Functionally, component of the acetyl coenzyme A carboxylase (ACC) complex. Biotin carboxylase (BC) catalyzes the carboxylation of biotin on its carrier protein (BCCP) and then the CO(2) group is transferred by the transcarboxylase to acetyl-CoA to form malonyl-CoA. This Acinetobacter baylyi (strain ATCC 33305 / BD413 / ADP1) protein is Acetyl-coenzyme A carboxylase carboxyl transferase subunit beta.